We begin with the raw amino-acid sequence, 554 residues long: Undecaprenyl phosphate-alpha-4-amino-4-deoxy-L-arabinose arabinosyl transferase (554 aa).

The next 11 membrane-spanning stretches (helical) occupy residues 4 to 24 (LKDS…LLPV), 87 to 107 (FGSI…ATLL), 115 to 135 (VLAT…TYAV), 178 to 198 (FMTK…PIVI), 206 to 226 (LVVF…PWAL), 262 to 282 (YLPI…GALF), 293 to 313 (ELFF…VAKG), 315 to 335 (LPTY…AYAT), 351 to 371 (VINL…GLGL), 384 to 404 (QKVW…FITL), and 414 to 434 (AAAC…QQVV).

It belongs to the glycosyltransferase 83 family.

The protein resides in the cell inner membrane. It catalyses the reaction 4-amino-4-deoxy-alpha-L-arabinopyranosyl di-trans,octa-cis-undecaprenyl phosphate + lipid IVA = lipid IIA + di-trans,octa-cis-undecaprenyl phosphate.. Its pathway is lipopolysaccharide metabolism; 4-amino-4-deoxy-beta-L-arabinose-lipid A biosynthesis. Its function is as follows. Catalyzes the transfer of the L-Ara4N moiety of the glycolipid undecaprenyl phosphate-alpha-L-Ara4N to lipid A. The modified arabinose is attached to lipid A and is required for resistance to polymyxin and cationic antimicrobial peptides. The protein is Undecaprenyl phosphate-alpha-4-amino-4-deoxy-L-arabinose arabinosyl transferase of Yersinia pseudotuberculosis serotype O:3 (strain YPIII).